Reading from the N-terminus, the 438-residue chain is UDP-N-acetylmuramoylalanine--D-glutamate ligase (438 aa).

Position 112 to 118 (112 to 118 (GSNGKST)) interacts with ATP.

It belongs to the MurCDEF family.

It localises to the cytoplasm. The catalysed reaction is UDP-N-acetyl-alpha-D-muramoyl-L-alanine + D-glutamate + ATP = UDP-N-acetyl-alpha-D-muramoyl-L-alanyl-D-glutamate + ADP + phosphate + H(+). It functions in the pathway cell wall biogenesis; peptidoglycan biosynthesis. Cell wall formation. Catalyzes the addition of glutamate to the nucleotide precursor UDP-N-acetylmuramoyl-L-alanine (UMA). The polypeptide is UDP-N-acetylmuramoylalanine--D-glutamate ligase (Yersinia pestis bv. Antiqua (strain Antiqua)).